A 161-amino-acid chain; its full sequence is RNA pyrophosphohydrolase (161 aa).

The region spanning 12 to 154 is the Nudix hydrolase domain; it reads PYRPGVGMMI…KRKLYQAVVK (143 aa). Positions 46–67 match the Nudix box motif; that stretch reads GGIVPGETPSIAAMREMLEEIG.

Belongs to the Nudix hydrolase family. RppH subfamily. Requires a divalent metal cation as cofactor.

In terms of biological role, accelerates the degradation of transcripts by removing pyrophosphate from the 5'-end of triphosphorylated RNA, leading to a more labile monophosphorylated state that can stimulate subsequent ribonuclease cleavage. The protein is RNA pyrophosphohydrolase of Rickettsia africae (strain ESF-5).